The sequence spans 396 residues: Ribosomal RNA large subunit methyltransferase I (396 aa).

The PUA domain occupies 2 to 81; it reads TVSIYLAKGR…EAIDKDFFVR (80 aa).

This sequence belongs to the methyltransferase superfamily. RlmI family.

It localises to the cytoplasm. The catalysed reaction is cytidine(1962) in 23S rRNA + S-adenosyl-L-methionine = 5-methylcytidine(1962) in 23S rRNA + S-adenosyl-L-homocysteine + H(+). In terms of biological role, specifically methylates the cytosine at position 1962 (m5C1962) of 23S rRNA. The polypeptide is Ribosomal RNA large subunit methyltransferase I (Aliivibrio fischeri (strain ATCC 700601 / ES114) (Vibrio fischeri)).